The sequence spans 173 residues: Peptide deformylase (173 aa).

Residues C91 and H133 each contribute to the Fe cation site. Residue E134 is part of the active site. H137 contributes to the Fe cation binding site.

Belongs to the polypeptide deformylase family. Fe(2+) is required as a cofactor.

The catalysed reaction is N-terminal N-formyl-L-methionyl-[peptide] + H2O = N-terminal L-methionyl-[peptide] + formate. Functionally, removes the formyl group from the N-terminal Met of newly synthesized proteins. Requires at least a dipeptide for an efficient rate of reaction. N-terminal L-methionine is a prerequisite for activity but the enzyme has broad specificity at other positions. In Blochmanniella pennsylvanica (strain BPEN), this protein is Peptide deformylase.